The chain runs to 215 residues: MRFFLDSANIDEIREANRLGVISGVTTNPSLIAKEGRNFREVVQEIAAIVDGPISAEVISTDAEGMIAEARELAKIHPNIVIKIPLCAAGLSATARLAQEGIRTNVTLIFSANQGLLAANAGATYVSPFVGRLDDIGHDGMDVLRELVEIFDIHGIATEIIAASIRHPVHVSAAARAGAPIATVPFKVLMQLVKHPLTDLGIERFLKDWESVKDK.

The Schiff-base intermediate with substrate role is filled by Lys-83.

The protein belongs to the transaldolase family. Type 3B subfamily.

The protein resides in the cytoplasm. It catalyses the reaction D-sedoheptulose 7-phosphate + D-glyceraldehyde 3-phosphate = D-erythrose 4-phosphate + beta-D-fructose 6-phosphate. It participates in carbohydrate degradation; pentose phosphate pathway; D-glyceraldehyde 3-phosphate and beta-D-fructose 6-phosphate from D-ribose 5-phosphate and D-xylulose 5-phosphate (non-oxidative stage): step 2/3. Functionally, transaldolase is important for the balance of metabolites in the pentose-phosphate pathway. The polypeptide is Probable transaldolase (Heliobacterium modesticaldum (strain ATCC 51547 / Ice1)).